The chain runs to 261 residues: Protein STAY-GREEN, chloroplastic (261 aa).

Residues 1 to 54 constitute a chloroplast transit peptide; sequence MDTLTSAPLLTTKFKPSFSPQQKPCFPHRRRFENGKKNQSIVPVARLFGPAIFE.

This sequence belongs to the staygreen family.

The protein localises to the plastid. It localises to the chloroplast. Functionally, probably involved in the disassembling mechanism of the intact light-harvesting complex of photosystem II (LHCII) in the thylakoid membranes. Required for the chlorophyll breakdown pathway. Acts independent and upstream of pheophorbide a oxygenase (PAO). The chain is Protein STAY-GREEN, chloroplastic (SGR) from Pisum sativum (Garden pea).